A 223-amino-acid chain; its full sequence is Ras-related protein RABA4c (223 aa).

Residue 22-29 (GDSAVGKS) coordinates GTP. Residues 44-52 (SKATIGVEF) carry the Effector region motif. GTP-binding positions include 70–74 (DTAGQ), 128–131 (NKTD), and 158–159 (SA). S-geranylgeranyl cysteine attachment occurs at residues Cys-219 and Cys-220.

This sequence belongs to the small GTPase superfamily. Rab family.

Its subcellular location is the cell membrane. Intracellular vesicle trafficking and protein transport. The protein is Ras-related protein RABA4c (RABA4C) of Arabidopsis thaliana (Mouse-ear cress).